Reading from the N-terminus, the 87-residue chain is Selenoprotein W (87 aa).

Positions 10–13 (CGAU) form a cross-link, cysteinyl-selenocysteine (Cys-Sec); redox-active. Residue selenocysteine 13 is a non-standard amino acid, selenocysteine. Position 37 is an S-glutathionyl cysteine (cysteine 37).

The protein belongs to the SelWTH family. Selenoprotein W subfamily. Interacts with DPYSL2, PRDX1, YWHAB, YWHAG, HSP70 and HSP90.

Its subcellular location is the cytoplasm. In terms of biological role, plays a role as a glutathione (GSH)-dependent antioxidant. May be involved in a redox-related process. May play a role in the myopathies of selenium deficiency. The chain is Selenoprotein W from Sus scrofa (Pig).